The primary structure comprises 515 residues: Maturase K (515 aa).

It belongs to the intron maturase 2 family. MatK subfamily.

Its subcellular location is the plastid. The protein resides in the chloroplast. Its function is as follows. Usually encoded in the trnK tRNA gene intron. Probably assists in splicing its own and other chloroplast group II introns. The polypeptide is Maturase K (Pinus patula (Mexican weeping pine)).